The following is a 354-amino-acid chain: Arginase-2, mitochondrial (354 aa).

The N-terminal 22 residues, 1 to 22 (MSYGSCVSRLLRTRVQSVLKKS), are a transit peptide targeting the mitochondrion. The Mn(2+) site is built by H120, D143, H145, and D147. Substrate is bound by residues 145-149 (HADIN), 156-158 (SGN), and D202. Mn(2+)-binding residues include D251 and D253. Substrate-binding residues include T265 and E296. Positions 330–354 (GHTVYEQLPPPSSPHESENAERVRI) are disordered. Residues 344–354 (HESENAERVRI) show a composition bias toward basic and acidic residues.

This sequence belongs to the arginase family. In terms of assembly, homotrimer. Requires Mn(2+) as cofactor.

It is found in the mitochondrion. It catalyses the reaction L-arginine + H2O = urea + L-ornithine. It functions in the pathway nitrogen metabolism; urea cycle; L-ornithine and urea from L-arginine: step 1/1. Functionally, may play a role in the regulation of extra-urea cycle arginine metabolism and also in down-regulation of nitric oxide synthesis. Extrahepatic arginase functions to regulate L-arginine bioavailability to nitric oxid synthase (NOS). Arginine metabolism is a critical regulator of innate and adaptive immune responses. Seems to be involved in negative regulation of the survival capacity of activated T cells. May suppress inflammation-related signaling in asthmatic airway epithelium. May play a role in promoting prenatal immune suppression. Regulates RPS6KB1 signaling, which promotes endothelial cell senescence and inflammation and implicates NOS3/eNOS dysfunction. Can inhibit endothelial autophagy independently of its enzymatic activity implicating mTORC2 signaling. Involved in vascular smooth muscle cell senescence and apoptosis independently of its enzymatic activity. The sequence is that of Arginase-2, mitochondrial (ARG2) from Oryctolagus cuniculus (Rabbit).